The chain runs to 79 residues: U16-theraphotoxin-Cg1a (79 aa).

The N-terminal stretch at 1–19 (MRALLIIAGLALFLVVCNA) is a signal peptide. The propeptide occupies 20–44 (SQVNEQRKLNEMLSVMFAVEEPQER). 3 disulfide bridges follow: cysteine 47–cysteine 62, cysteine 54–cysteine 67, and cysteine 61–cysteine 74.

The protein belongs to the neurotoxin 10 (Hwtx-1) family. 34 (Jztx-26) subfamily. As to expression, expressed by the venom gland.

The protein localises to the secreted. In terms of biological role, probable ion channel inhibitor. The protein is U16-theraphotoxin-Cg1a of Chilobrachys guangxiensis (Chinese earth tiger tarantula).